We begin with the raw amino-acid sequence, 289 residues long: Elongation factor Ts (289 aa).

The tract at residues Thr-82–Val-85 is involved in Mg(2+) ion dislocation from EF-Tu.

This sequence belongs to the EF-Ts family.

The protein localises to the cytoplasm. In terms of biological role, associates with the EF-Tu.GDP complex and induces the exchange of GDP to GTP. It remains bound to the aminoacyl-tRNA.EF-Tu.GTP complex up to the GTP hydrolysis stage on the ribosome. The sequence is that of Elongation factor Ts from Chloroherpeton thalassium (strain ATCC 35110 / GB-78).